The following is a 433-amino-acid chain: Keratin, type I cytoskeletal 47 kDa (433 aa).

The head stretch occupies residues 1-73 (MSYSTRSISQ…AFNVSVTSNN (73 aa)). The segment at 74–109 (GKETMQNLNDRLANYLDRVRSLEQANHELELKIREY) is coil 1A. The IF rod domain maps to 74 to 385 (GKETMQNLND…RLLEGEDTRF (312 aa)). A linker 1 region spans residues 110–127 (LDKKAAVGSLDYSGYYNT). The tract at residues 128 to 219 (INLLRSQIND…KNHEEELAVV (92 aa)) is coil 1B. The segment at 220-242 (RSSARGNVDVQVDSAPPVDLAQI) is linker 12. The tract at residues 243 to 381 (MADVRSQYES…ATYRRLLEGE (139 aa)) is coil 2. Residues 382-433 (DTRFSQTETQKAVTIVSKEQSSSSIKKVKTVIEEVVDGKVVSSRVEELTETS) are tail.

This sequence belongs to the intermediate filament family. Heterotetramer of two type I and two type II keratins.

The sequence is that of Keratin, type I cytoskeletal 47 kDa (xk70a) from Xenopus laevis (African clawed frog).